The following is a 445-amino-acid chain: FAS-associated factor 2 (445 aa).

One can recognise a UBA domain in the interval 12–53 (EQTEKLLQFQDLTGIESMDQCRQTLQQHNWNIEAAVQDRLNE). Positions 275-353 (SERLEREERN…ERKSECLPAE (79 aa)) form a coiled coil. Basic and acidic residues predominate over residues 303-348 (ADQEKERKKKEKQEQKRREEEEAQLKQMLEERKKRNLEEEKERKSE). Positions 303–354 (ADQEKERKKKEKQEQKRREEEEAQLKQMLEERKKRNLEEEKERKSECLPAEP) are disordered. The region spanning 357 to 439 (DHPDNVKIIF…GLSQSQLLFV (83 aa)) is the UBX domain.

It is found in the cytoplasm. The protein resides in the lipid droplet. It localises to the endoplasmic reticulum. Functionally, plays an important role in endoplasmic reticulum-associated degradation (ERAD) that mediates ubiquitin-dependent degradation of misfolded endoplasmic reticulum proteins. Involved in inhibition of lipid droplet degradation. Involved in stress granule disassembly. In Xenopus tropicalis (Western clawed frog), this protein is FAS-associated factor 2 (faf2).